The sequence spans 132 residues: Phosphomevalonate dehydratase small subunit (132 aa).

The active-site Proton acceptor is the Ser58.

Belongs to the AcnX type II small subunit family. In terms of assembly, heterodimer composed of a large subunit (PMDh-L) and a small subunit (PMDh-S).

The catalysed reaction is (R)-5-phosphomevalonate = (2E)-3-methyl-5-phosphooxypent-2-enoate + H2O. It functions in the pathway isoprenoid biosynthesis; isopentenyl diphosphate biosynthesis via mevalonate pathway. Its activity is regulated as follows. Neither the addition of 1 mM Mg(2+) nor 1 mM Mn(2+) has a significant effect on the activity, whereas Zn(2+) causes almost complete inactivation. Strongly inhibited by H(2)O(2), but not by EDTA or iodoacetamide. Its function is as follows. Component of a hydro-lyase that catalyzes the dehydration of mevalonate 5-phosphate (MVA5P) to form trans-anhydromevalonate 5-phosphate (tAHMP). Involved in the archaeal mevalonate (MVA) pathway, which provides fundamental precursors for isoprenoid biosynthesis, such as isopentenyl diphosphate (IPP) and dimethylallyl diphosphate (DMAPP). This chain is Phosphomevalonate dehydratase small subunit, found in Aeropyrum pernix (strain ATCC 700893 / DSM 11879 / JCM 9820 / NBRC 100138 / K1).